The sequence spans 312 residues: Ribosomal protein L11 methyltransferase (312 aa).

Positions 162, 183, 205, and 248 each coordinate S-adenosyl-L-methionine.

The protein belongs to the methyltransferase superfamily. PrmA family.

Its subcellular location is the cytoplasm. The enzyme catalyses L-lysyl-[protein] + 3 S-adenosyl-L-methionine = N(6),N(6),N(6)-trimethyl-L-lysyl-[protein] + 3 S-adenosyl-L-homocysteine + 3 H(+). Its function is as follows. Methylates ribosomal protein L11. The sequence is that of Ribosomal protein L11 methyltransferase from Geobacillus kaustophilus (strain HTA426).